The chain runs to 335 residues: Vitamin B12 import system permease protein BtuC (335 aa).

9 consecutive transmembrane segments (helical) span residues L22–V42, L67–F87, P94–G114, L117–L137, L153–F173, L200–F220, V243–V263, Y281–A301, and A308–L328.

This sequence belongs to the binding-protein-dependent transport system permease family. FecCD subfamily. In terms of assembly, the complex is composed of two ATP-binding proteins (BtuD), two transmembrane proteins (BtuC) and a solute-binding protein (BtuF).

The protein localises to the cell inner membrane. In terms of biological role, part of the ABC transporter complex BtuCDF involved in vitamin B12 import. Involved in the translocation of the substrate across the membrane. This is Vitamin B12 import system permease protein BtuC from Serratia proteamaculans (strain 568).